We begin with the raw amino-acid sequence, 351 residues long: Prohormone-2 (351 aa).

The N-terminal stretch at 1–21 is a signal peptide; the sequence is MMCDWVWLLLTLCSLLMIVQS. 2 propeptides span residues 22–177 and 192–319; these read LPTN…QTQV and ELDI…MISR. Positions 51–69 are enriched in polar residues; the sequence is GNQQNHQPENNPSSSYSST. Disordered stretches follow at residues 51–71 and 136–176; these read GNQQNHQPENNPSSSYSSTAE and NEDR…VQTQ. The span at 136–145 shows a compositional bias: basic and acidic residues; sequence NEDRRKRSEK. Residues 158 to 176 are compositionally biased toward low complexity; it reads PSTTSFQSPTSTQQSVQTQ.

It is found in the secreted. The protein is Prohormone-2 of Apis mellifera (Honeybee).